A 245-amino-acid chain; its full sequence is Uridylate kinase (245 aa).

15-18 (KLSG) serves as a coordination point for ATP. Residues 23-28 (GDEGFG) are involved in allosteric activation by GTP. Position 57 (G57) interacts with UMP. ATP contacts are provided by G58 and R62. Residues D77 and 138–145 (TGNPFCTT) contribute to the UMP site. Positions 165, 171, and 174 each coordinate ATP.

Belongs to the UMP kinase family. In terms of assembly, homohexamer.

The protein localises to the cytoplasm. It carries out the reaction UMP + ATP = UDP + ADP. Its pathway is pyrimidine metabolism; CTP biosynthesis via de novo pathway; UDP from UMP (UMPK route): step 1/1. Allosterically activated by GTP. Inhibited by UTP. In terms of biological role, catalyzes the reversible phosphorylation of UMP to UDP. The chain is Uridylate kinase from Shewanella baltica (strain OS155 / ATCC BAA-1091).